A 216-amino-acid chain; its full sequence is Nucleoid occlusion factor SlmA (216 aa).

The interval M1–K23 is disordered. Positions E13–K23 are enriched in basic and acidic residues. One can recognise an HTH tetR-type domain in the interval E28–L88. The H-T-H motif DNA-binding region spans T51–F70.

Belongs to the nucleoid occlusion factor SlmA family. In terms of assembly, homodimer. Interacts with FtsZ.

The protein resides in the cytoplasm. Its subcellular location is the nucleoid. Its function is as follows. Required for nucleoid occlusion (NO) phenomenon, which prevents Z-ring formation and cell division over the nucleoid. Acts as a DNA-associated cell division inhibitor that binds simultaneously chromosomal DNA and FtsZ, and disrupts the assembly of FtsZ polymers. SlmA-DNA-binding sequences (SBS) are dispersed on non-Ter regions of the chromosome, preventing FtsZ polymerization at these regions. This chain is Nucleoid occlusion factor SlmA, found in Mannheimia succiniciproducens (strain KCTC 0769BP / MBEL55E).